The following is a 230-amino-acid chain: Type 4 apparatus protein DotY (230 aa).

Positions 202-230 (EPKALETKREEIRQEIESGAEAPTTQSIR) are disordered. Residues 204–217 (KALETKREEIRQEI) show a composition bias toward basic and acidic residues.

The T4BSS is a complex nanomachine composed of several subcomplexes. This subunit is part of the Type IV Coupling Complex (T4CC), a subcomplex composed of the DotLMNYZ core and the IcmSW-LvgA adapter subunits, linked by the C-terminal tail of DotL. Six DotLMNYZ hetero-pentameric units may assemble into a hexameric nanomachine, forming an inner membrane channel for effectors to pass through. Interacts exclusively with DotZ. DotY and DotZ are co-dependent for the assembly into the T4CC.

Its subcellular location is the cytoplasm. Its function is as follows. Component of the Dot/Icm type IVB secretion system (T4BSS), which is used to inject bacterial effector proteins into eukaryotic host cells. Part of a subcomplex which recruits effector proteins and delivers them to the core transmembrane subcomplex. DotY and DotZ play a role in effector translocation, but are not essential and do not influence the stability of the subcomplex main components. The DotY/DotZ main function is to optimize secretion by modulating the delivery trajectory of the IcmSW module and the localization of the machinery to the poles. The polypeptide is Type 4 apparatus protein DotY (Legionella pneumophila subsp. pneumophila (strain Philadelphia 1 / ATCC 33152 / DSM 7513)).